We begin with the raw amino-acid sequence, 337 residues long: Ribosomal RNA small subunit methyltransferase H (337 aa).

Residues 36–38, D56, F82, D100, and Q107 each bind S-adenosyl-L-methionine; that span reads GGH. The disordered stretch occupies residues 314–337; it reads GLERRSGRIPNPRSPIPASQGDAR.

This sequence belongs to the methyltransferase superfamily. RsmH family.

Its subcellular location is the cytoplasm. It carries out the reaction cytidine(1402) in 16S rRNA + S-adenosyl-L-methionine = N(4)-methylcytidine(1402) in 16S rRNA + S-adenosyl-L-homocysteine + H(+). Specifically methylates the N4 position of cytidine in position 1402 (C1402) of 16S rRNA. This Xanthomonas oryzae pv. oryzae (strain PXO99A) protein is Ribosomal RNA small subunit methyltransferase H.